The primary structure comprises 285 residues: Polyamine aminopropyltransferase (285 aa).

Positions 2-237 (QMWFSQYHTV…GYWLFGFASK (236 aa)) constitute a PABS domain. Gln31 provides a ligand contact to S-methyl-5'-thioadenosine. Position 86 (Asp86) interacts with spermidine. S-methyl-5'-thioadenosine-binding positions include Glu106 and 137 to 138 (DG). Asp155 (proton acceptor) is an active-site residue. Spermidine is bound at residue 155-158 (DSTD).

Belongs to the spermidine/spermine synthase family. As to quaternary structure, homodimer or homotetramer.

It is found in the cytoplasm. The enzyme catalyses S-adenosyl 3-(methylsulfanyl)propylamine + putrescine = S-methyl-5'-thioadenosine + spermidine + H(+). The protein operates within amine and polyamine biosynthesis; spermidine biosynthesis; spermidine from putrescine: step 1/1. Catalyzes the irreversible transfer of a propylamine group from the amino donor S-adenosylmethioninamine (decarboxy-AdoMet) to putrescine (1,4-diaminobutane) to yield spermidine. The sequence is that of Polyamine aminopropyltransferase from Agathobacter rectalis (strain ATCC 33656 / DSM 3377 / JCM 17463 / KCTC 5835 / VPI 0990) (Eubacterium rectale).